Here is a 258-residue protein sequence, read N- to C-terminus: Snake venom serine proteinase 5 (258 aa).

An N-terminal signal peptide occupies residues 1-18 (MVLIRVLANLLILQLSYA). Residues 19–24 (QKSSEL) constitute a propeptide that is removed on maturation. The region spanning 25–249 (VVGGDECNIN…YNDWIQSIIA (225 aa)) is the Peptidase S1 domain. 6 cysteine pairs are disulfide-bonded: cysteine 31/cysteine 163, cysteine 50/cysteine 66, cysteine 98/cysteine 256, cysteine 142/cysteine 210, cysteine 174/cysteine 189, and cysteine 200/cysteine 225. Residue asparagine 44 is glycosylated (N-linked (GlcNAc...) asparagine). Active-site charge relay system residues include histidine 65 and aspartate 110. The active-site Charge relay system is serine 204.

This sequence belongs to the peptidase S1 family. Snake venom subfamily. As to quaternary structure, monomer. As to expression, expressed by the venom gland.

Its subcellular location is the secreted. Functionally, snake venom serine protease that may act in the hemostasis system of the prey. The chain is Snake venom serine proteinase 5 from Crotalus adamanteus (Eastern diamondback rattlesnake).